Reading from the N-terminus, the 253-residue chain is Ribonuclease HII (253 aa).

In terms of domain architecture, RNase H type-2 spans 30-221 (GPVAGVDEVG…VRRLVVDGEP (192 aa)). Residues aspartate 36, glutamate 37, and aspartate 130 each coordinate a divalent metal cation.

It belongs to the RNase HII family. Requires Mn(2+) as cofactor. It depends on Mg(2+) as a cofactor.

The protein resides in the cytoplasm. It catalyses the reaction Endonucleolytic cleavage to 5'-phosphomonoester.. Functionally, endonuclease that specifically degrades the RNA of RNA-DNA hybrids. The chain is Ribonuclease HII from Mycolicibacterium gilvum (strain PYR-GCK) (Mycobacterium gilvum (strain PYR-GCK)).